Here is a 635-residue protein sequence, read N- to C-terminus: Beta-mannosyltransferase 2 (635 aa).

The Cytoplasmic portion of the chain corresponds to 1-6 (MRTRLN). A helical transmembrane segment spans residues 7–27 (FLLLCIASVLSVIWIGVLLTW). The Extracellular segment spans residues 28–635 (NDNNLGGISL…EKKEAEKKGK (608 aa)). The N-linked (GlcNAc...) asparagine glycan is linked to N484. The stretch at 512 to 635 (TRGEAERRRR…EKKEAEKKGK (124 aa)) forms a coiled coil. The tract at residues 517 to 635 (ERRRRVAEER…EKKEAEKKGK (119 aa)) is disordered.

It belongs to the BMT family.

It localises to the membrane. Beta-mannosyltransferase involved in cell wall biosynthesis. Initiates the beta-mannosylation of core N-linked glycans. The chain is Beta-mannosyltransferase 2 (BMT2) from Komagataella phaffii (strain ATCC 76273 / CBS 7435 / CECT 11047 / NRRL Y-11430 / Wegner 21-1) (Yeast).